The sequence spans 320 residues: MSSPESALPPALLLLGPTASGKTASALALAATLPVEIISVDSALVYRDMDIGTAKPSAAEQAVCPHHLIDVVSPEEAYSAARFCAEASVLMRDISARGRIPLLAGGTMLYFKALRDGLSDLPPADPVLRRAIEERAAAAGWPALHAELARLDPDAAARLEPTDAQRIQRALEIVTLSGAPLAASYARREDAPLPCRLLPIALAPSDRAVLHARIEQRFDQMLAAGLVDEVAALRERYVLQPQMASMRCVGYRQAWEFLDGEIDRATLRFKGIAATRQLAKRQLTWQRQFRDQWPELVELDCLAPDLPQHVRDTALRLLGA.

16–23 (GPTASGKT) contributes to the ATP binding site. A substrate-binding site is contributed by 18–23 (TASGKT). Interaction with substrate tRNA stretches follow at residues 41-44 (DSAL), 165-169 (QRIQR), and 247-252 (RCVGYR).

The protein belongs to the IPP transferase family. In terms of assembly, monomer. It depends on Mg(2+) as a cofactor.

It catalyses the reaction adenosine(37) in tRNA + dimethylallyl diphosphate = N(6)-dimethylallyladenosine(37) in tRNA + diphosphate. Its function is as follows. Catalyzes the transfer of a dimethylallyl group onto the adenine at position 37 in tRNAs that read codons beginning with uridine, leading to the formation of N6-(dimethylallyl)adenosine (i(6)A). In Azoarcus sp. (strain BH72), this protein is tRNA dimethylallyltransferase.